The primary structure comprises 400 residues: Argininosuccinate synthase (400 aa).

ATP contacts are provided by residues 10-18 and Ala-38; that span reads AYSGGVDTS. Tyr-89 contacts L-citrulline. Gly-119 provides a ligand contact to ATP. Positions 121, 125, and 126 each coordinate L-aspartate. Asn-125 lines the L-citrulline pocket. Residues Arg-129, Ser-177, Ser-186, Glu-262, and Tyr-274 each coordinate L-citrulline.

This sequence belongs to the argininosuccinate synthase family. Type 1 subfamily. Homotetramer.

Its subcellular location is the cytoplasm. The enzyme catalyses L-citrulline + L-aspartate + ATP = 2-(N(omega)-L-arginino)succinate + AMP + diphosphate + H(+). Its pathway is amino-acid biosynthesis; L-arginine biosynthesis; L-arginine from L-ornithine and carbamoyl phosphate: step 2/3. This Prochlorococcus marinus (strain NATL1A) protein is Argininosuccinate synthase.